A 79-amino-acid polypeptide reads, in one-letter code: Acyl carrier protein (79 aa).

The Carrier domain maps to 2 to 77 (SDIAERVKKI…DAVKFLEKNS (76 aa)). Residue Ser37 is modified to O-(pantetheine 4'-phosphoryl)serine.

This sequence belongs to the acyl carrier protein (ACP) family. In terms of processing, 4'-phosphopantetheine is transferred from CoA to a specific serine of apo-ACP by AcpS. This modification is essential for activity because fatty acids are bound in thioester linkage to the sulfhydryl of the prosthetic group.

Its subcellular location is the cytoplasm. It participates in lipid metabolism; fatty acid biosynthesis. In terms of biological role, carrier of the growing fatty acid chain in fatty acid biosynthesis. This is Acyl carrier protein from Methylobacterium radiotolerans (strain ATCC 27329 / DSM 1819 / JCM 2831 / NBRC 15690 / NCIMB 10815 / 0-1).